The chain runs to 340 residues: UDP-glucose 4-epimerase (340 aa).

NAD(+)-binding positions include 12–13 (FI), 32–37 (DNYGNS), 59–60 (DV), 81–85 (FAGLK), asparagine 100, serine 125, tyrosine 150, lysine 154, and phenylalanine 179. Substrate-binding residues include serine 125 and tyrosine 150. Tyrosine 150 acts as the Proton acceptor in catalysis. Substrate contacts are provided by residues asparagine 180, 200–201 (NL), 217–219 (QVY), arginine 232, and 292–295 (RPGD).

The protein belongs to the NAD(P)-dependent epimerase/dehydratase family. As to quaternary structure, homodimer. The cofactor is NAD(+).

The catalysed reaction is UDP-alpha-D-glucose = UDP-alpha-D-galactose. It participates in carbohydrate metabolism; galactose metabolism. Functionally, involved in the metabolism of galactose. Catalyzes the conversion of UDP-galactose (UDP-Gal) to UDP-glucose (UDP-Glc) through a mechanism involving the transient reduction of NAD. Can also epimerize UDP-GalNAc to UDP-GlcNAc. Involved in the lacto-N-biose I/galacto-N-biose (LNB/GNB) degradation pathway, which is important for host intestinal colonization by bifidobacteria. This is UDP-glucose 4-epimerase (lnpD) from Bifidobacterium longum subsp. longum (strain ATCC 15707 / DSM 20219 / JCM 1217 / NCTC 11818 / E194b).